The following is a 686-amino-acid chain: MFWRDITLSVWRKKTTGLKTKKRLLPLVLAAALCSSPVWAEEATFTANFKDTDLKSFIETVGANLNKTIIMGPGVQGKVSIRTMTPLNERQYYQLFLNLLEAQGYAVVPMENDVLKVVKSSAAKVEPLPLVGEGSDNYAGDEMVTKVVPVRNVSVRELAPILRQMIDSAGSGNVVNYDPSNVIMLTGRASVVERLTEVIQRVDHAGNRTEEVIPLDNASASEIARVLESLTKNSGENQPATLKSQIVADERTNSVIVSGDPATRDKMRRLIRRLDSEMERSGNSQVFYLKYSKAEDLVDVLKQVSGTLTAAKEEAEGTVGSGREIVSIAASKHSNALIVTAPQDIMQSLQSVIEQLDIRRAQVHVEALIVEVAEGSNINFGVQWASKDAGLMQFANGTQIPIGTLGAAISQAKPQKGSTVISENGATTINPDTNGDLSTLAQLLSGFSGTAVGVVKGDWMALVQAVKNDSSSNVLSTPSITTLDNQEAFFMVGQDVPVLTGSTVGSNNSNPFNTVERKKVGIMLKVTPQINEGNAVQMVIEQEVSKVEGQTSLDVVFGERKLKTTVLANDGELIVLGGLMDDQAGESVAKVPLLGDIPLIGNLFKSTADKKEKRNLMVFIRPTILRDGMAADGVSQRKYNYMRAEQIYRDEQGLSLMPHTAQPVLPAQNQALPPEVRAFLNAGRTR.

A signal peptide spans 1–40; that stretch reads MFWRDITLSVWRKKTTGLKTKKRLLPLVLAAALCSSPVWA. The segment at 41-140 is N0, contacts GspC2; it reads EEATFTANFK…VGEGSDNYAG (100 aa). The interval 142-206 is N1; it reads EMVTKVVPVR…EVIQRVDHAG (65 aa). The segment at 207–279 is N2; it reads NRTEEVIPLD…LIRRLDSEME (73 aa). Positions 282-357 are N3; sequence GNSQVFYLKY…SLQSVIEQLD (76 aa). A secretin region spans residues 360 to 627; the sequence is RAQVHVEALI…VFIRPTILRD (268 aa). Residues 414–433 form a cap gate region; the sequence is PQKGSTVISENGATTINPDT. Residues 629-686 form a s domain, contacts AspS2 region; the sequence is MAADGVSQRKYNYMRAEQIYRDEQGLSLMPHTAQPVLPAQNQALPPEVRAFLNAGRTR.

The protein belongs to the bacterial secretin family. GSP D subfamily. In terms of assembly, forms a cylindrical channel with 15 subunits, each of which interacts with the surrounding pilotin AspS2 proteins (also called GspS-beta). Interacts with inner cell membrane protein GspC2 in the periplasm. Forms multimers in the outer membrane. The isolated N0 domain forms dimers that self-assemble into rings.

It localises to the cell outer membrane. Part of a type II secretion system (T2SS, formerly general secretion pathway, GSP) for the export of folded proteins across the outer membrane. This subunit forms the outer membrane channel. This Escherichia coli O78:H11 (strain H10407 / ETEC) protein is Secretin GspD 2 (gspD2).